A 130-amino-acid chain; its full sequence is Small ribosomal subunit protein uS8 (130 aa).

It belongs to the universal ribosomal protein uS8 family. As to quaternary structure, part of the 30S ribosomal subunit. Contacts proteins S5 and S12.

Functionally, one of the primary rRNA binding proteins, it binds directly to 16S rRNA central domain where it helps coordinate assembly of the platform of the 30S subunit. The chain is Small ribosomal subunit protein uS8 from Cytophaga hutchinsonii (strain ATCC 33406 / DSM 1761 / CIP 103989 / NBRC 15051 / NCIMB 9469 / D465).